The following is a 366-amino-acid chain: MGCGGTLFYPLLITLSVALITYNIIISANAPLKQGFPGRSSSSDISIDPVIELPRGGGSRNNDGKRIRLFHTAVTASDSVYNTWQCRVMYYWFKKIQASAGPGSEMGGFTRILHSGKPDQYMDEIPTFVAQPLPSGMDQGYVVLNRPWAFVQWLQQTDIKEDYILMSEPDHIIVKPIPNLAKDGLGAAFPFFYIEPKKYEKVLRKYYPEVRGPVTNIDPIGNSPVIVGKDALKKIAPTWMNVSLAMKKDPEADKAFGWVLEMYAYAVSSALHGVSNILHKDFMIQPPWDIEVGDKYIIHYTYGCDYDMKGKLTYGKIGEWRFDKRSYDSKPPPRNLTMPPPGVSQSVVTLVKMINEATANIPNWGS.

The helical; Signal-anchor transmembrane segment at 6 to 26 threads the bilayer; the sequence is TLFYPLLITLSVALITYNIII.

Ubiquitous.

It localises to the golgi apparatus. The protein localises to the cis-Golgi network membrane. The enzyme catalyses trans-4-hydroxy-L-prolyl-[protein] + UDP-beta-L-arabinofuranose = O-(beta-L-arabinofuranosyl)-trans-4-hydroxy-L-prolyl-[protein] + UDP + H(+). Functionally, glycosyltransferase involved in the O-arabinosylation of several proteins including extensins and small signaling peptides. Catalyzes the transfer of the initial L-arabinose to the hydroxyl group of Hyp residues. Contributes redundantly with HPAT2 and HPAT3 to arabinosylation of EXT3. This Arabidopsis thaliana (Mouse-ear cress) protein is Hydroxyproline O-arabinosyltransferase 1.